Here is a 545-residue protein sequence, read N- to C-terminus: T-complex protein 1 subunit gamma (545 aa).

N-acetylmethionine is present on methionine 1. Residues 1 to 24 (MMGHRPVLVLSQNTKRESGRKVQS) are disordered. A Phosphoserine modification is found at serine 11. Residue lysine 15 forms a Glycyl lysine isopeptide (Lys-Gly) (interchain with G-Cter in SUMO2) linkage. Glycine 42 contacts ADP. An ATP-binding site is contributed by glycine 42. Aspartate 93 provides a ligand contact to Mg(2+). 6 residues coordinate ADP: glycine 94, threonine 95, threonine 96, serine 97, threonine 162, and lysine 163. 3 residues coordinate ATP: glycine 94, threonine 95, and threonine 96. Serine 170 bears the Phosphoserine mark. Position 222 is an N6-acetyllysine (lysine 222). Phosphoserine occurs at positions 243 and 244. Tyrosine 247 carries the post-translational modification Phosphotyrosine. Residues lysine 248 and lysine 249 each participate in a glycyl lysine isopeptide (Lys-Gly) (interchain with G-Cter in SUMO2) cross-link. Serine 252 bears the Phosphoserine mark. A disulfide bond links cysteine 366 and cysteine 372. Lysine 381 participates in a covalent cross-link: Glycyl lysine isopeptide (Lys-Gly) (interchain with G-Cter in SUMO2). Glycine 411 contacts ADP. Glycine 411 is a binding site for ATP. 2 positions are modified to phosphothreonine: threonine 430 and threonine 459. Glycine 482, glutamate 483, glutamate 497, and lysine 502 together coordinate ADP. Glycine 482 is an ATP binding site. Glutamate 497 provides a ligand contact to ATP. The interval 526–545 (HKKKGDDQNRQTGAPDAGQE) is disordered.

Belongs to the TCP-1 chaperonin family. In terms of assembly, component of the chaperonin-containing T-complex (TRiC), a hexadecamer composed of two identical back-to-back stacked rings enclosing a protein folding chamber. Each ring is made up of eight different subunits: TCP1/CCT1, CCT2, CCT3, CCT4, CCT5, CCT6A/CCT6, CCT7, CCT8. Interacts with PACRG. Interacts with DNAAF4. Interacts with DLEC1. In terms of processing, the N-terminus is blocked.

The protein localises to the cytoplasm. It carries out the reaction ATP + H2O = ADP + phosphate + H(+). Functionally, component of the chaperonin-containing T-complex (TRiC), a molecular chaperone complex that assists the folding of actin, tubulin and other proteins upon ATP hydrolysis. The TRiC complex mediates the folding of WRAP53/TCAB1, thereby regulating telomere maintenance. As part of the TRiC complex may play a role in the assembly of BBSome, a complex involved in ciliogenesis regulating transports vesicles to the cilia. The sequence is that of T-complex protein 1 subunit gamma (Cct3) from Mus musculus (Mouse).